The primary structure comprises 964 residues: MMIPELGRRPMHRGNEDSSFGDDYEKEIGVLLGEQQRRQVEADELERELNLYRSGSAPPTVDGSLSAAGGLFSGGGGASFLEFGGVNKGNGFGGDDEEFRKDPAYLSYYYANMKLNPRLPPPLMSREDLRVAQRLKGSNNVLGGVGDRRKVNDSRSLFSMPPGFEAGKPGASASEWDANGLIGLGLGGKQKSFADIFQADMGHPVVQQPSRPASRNTFDENVDSNNNLSPSASQGIGAPSPYCYAAVLGSSLSRNGTPDPQGIARVPSPCLTPIGSGRVSSNDKRNTSNQSPFNGVTSGLNESSDLVNALSGLNLSGTGGLDERGQAEQDVEKVRNYMFGLQDGHNEVNPHGFPNRSDQARGTASCRNSQMRGSQGSAYNSGSGVANPYQHHDSPNYYALNPAVASMMANQLGTNNYSPMYENASATLGYSAMDSRLHGGSFVSSGQNLSESRNIGRVGNRMMEGGTGHPSHLADPMYHQYARFSENADSFDLLNDPSMDRNYGNSYMNMLEIQRAYLGSQKSQYGLPYKSGSPNSHSYYGSPTFGSNMSYPGSPLAHHGMPNSLMSPYSPMRRGEVNMRYPAATRNYTGGVMGSWHMDASLDEGFGSSMLEEFKSNKTRGFELSEIAGHVVEFSSDQYGSRFIQQKLETATTDEKNMVYEEIMPKALALMTDVFGNYVIQKFFEHGLPPQRRELGEKLIDNVLPLSLQMYGCRVIQKAIEVVDLDQKIQMVKELDGHVMRCVRDQNGNHVVQKCIECVPEENIEFIISTFFGHVVTLSTHPYGCRVIQRVLEHCHNPDTQSKVMEEILSTVSMLTQDQYGNYVVQHVLEHGKPDERTVIIKELAGKIVQMSQQKFASNVVEKCLTFGGPEERELLVNEMLGTTDENEPLQAMMKDQFANYVVQKVLETCDDQQRELILTRIKVHLNALKKYTYGKHIVARVEKLVAAGERRMALQSLPQPLVA.

The tract at residues 1–22 (MMIPELGRRPMHRGNEDSSFGD) is disordered. Ser192 carries the post-translational modification Phosphoserine. 3 disordered regions span residues 204-235 (PVVQ…ASQG), 256-300 (GTPD…TSGL), and 343-388 (DGHN…VANP). 2 stretches are compositionally biased toward polar residues: residues 207–216 (QQPSRPASRN) and 223–234 (DSNNNLSPSASQ). Residue Thr257 is modified to Phosphothreonine. Composition is skewed to polar residues over residues 287 to 300 (TSNQ…TSGL) and 356 to 384 (RSDQ…SGSG). In terms of domain architecture, PUM-HD spans 606-946 (FGSSMLEEFK…HIVARVEKLV (341 aa)). Pumilio repeat units follow at residues 626–661 (EIAG…MVYE), 662–697 (EIMP…ELGE), 698–733 (KLID…QMVK), 734–769 (ELDG…FIIS), 770–806 (TFFG…KVME), 807–842 (EILS…VIIK), 843–878 (ELAG…LLVN), and 879–920 (EMLG…LILT).

Its subcellular location is the cytoplasm. Functionally, sequence-specific RNA-binding protein that regulates translation and mRNA stability by binding the 3'-UTR of target mRNAs. Binds the APUM-binding elements (APBEs) in the 3'-UTR mRNA sequence of CLV1, PNH, WUS and FAS2. The polypeptide is Pumilio homolog 3 (APUM3) (Arabidopsis thaliana (Mouse-ear cress)).